The following is a 296-amino-acid chain: Enoyl-CoA hydratase AKT3-2 (296 aa).

Positions 294 to 296 (PKL) match the Peroxisomal targeting signal type 1 motif.

The protein belongs to the enoyl-CoA hydratase/isomerase family.

It localises to the peroxisome. It catalyses the reaction a (3S)-3-hydroxyacyl-CoA = a (2E)-enoyl-CoA + H2O. The catalysed reaction is a 4-saturated-(3S)-3-hydroxyacyl-CoA = a (3E)-enoyl-CoA + H2O. It functions in the pathway mycotoxin biosynthesis. In terms of biological role, enoyl-CoA hydratase; part of the gene clusters that mediate the biosynthesis of the host-selective toxins (HSTs) AK-toxins responsible for Japanese pear black spot disease by the Japanese pear pathotype. AK-toxins are esters of 9,10-epoxy 8-hydroxy 9-methyldecatrienoic acid (EDA). On cellular level, AK-toxins affect plasma membrane of susceptible cells and cause a sudden increase in loss of K(+) after a few minutes of toxin treatment. The acyl-CoA ligase AKT1, the hydrolase AKT2 and enoyl-CoA hydratase AKT3 are all involved in the biosynthesis of the AK-, AF- and ACT-toxin common 9,10-epoxy-8-hydroxy-9-methyl-decatrienoic acid (EDA) structural moiety. Part of the EDA biosynthesis occurs in the peroxisome since these 3 enzymes are localized in peroxisomes. The exact roles of the 3 enzymes, as well as of additional AK-toxin clusters enzymes, including AKT4, AKT6 and AKTS1, have still to be elucidated. The Cytochrome P450 monooxygenase AKT7 on the other side functions to limit production of EDA and AK-toxin, probably via the catalysis of a side reaction of EDA or its precursor. This Alternaria alternata (Alternaria rot fungus) protein is Enoyl-CoA hydratase AKT3-2.